Here is a 215-residue protein sequence, read N- to C-terminus: Pyrrolidone-carboxylate peptidase (215 aa).

Active-site residues include glutamate 81, cysteine 144, and histidine 168.

Belongs to the peptidase C15 family. Homotetramer.

The protein localises to the cytoplasm. The enzyme catalyses Release of an N-terminal pyroglutamyl group from a polypeptide, the second amino acid generally not being Pro.. Removes 5-oxoproline from various penultimate amino acid residues except L-proline. This is Pyrrolidone-carboxylate peptidase from Bacillus licheniformis (strain ATCC 14580 / DSM 13 / JCM 2505 / CCUG 7422 / NBRC 12200 / NCIMB 9375 / NCTC 10341 / NRRL NRS-1264 / Gibson 46).